The following is a 792-amino-acid chain: Molybdenum cofactor sulfurase (792 aa).

Lysine 246 carries the post-translational modification N6-(pyridoxal phosphate)lysine. Residue cysteine 414 is part of the active site. The 147-residue stretch at 646–792 folds into the MOSC domain; it reads LRLLRQSSQR…LTCGDVVVVT (147 aa). Serine 748 bears the Phosphoserine mark.

The protein belongs to the class-V pyridoxal-phosphate-dependent aminotransferase family. MOCOS subfamily. It depends on pyridoxal 5'-phosphate as a cofactor.

It carries out the reaction Mo-molybdopterin + L-cysteine + AH2 = thio-Mo-molybdopterin + L-alanine + A + H2O. It participates in cofactor biosynthesis; molybdopterin biosynthesis. In terms of biological role, sulfurates the molybdenum cofactor. Sulfation of molybdenum is essential for xanthine dehydrogenase (XDH) and aldehyde oxidase (ADO) enzymes in which molybdenum cofactor is liganded by 1 oxygen and 1 sulfur atom in active form. The protein is Molybdenum cofactor sulfurase of Drosophila pseudoobscura pseudoobscura (Fruit fly).